We begin with the raw amino-acid sequence, 304 residues long: Oxidoreductase calM (304 aa).

Residues I26, T45, D68, and N98 each coordinate NADP(+). Catalysis depends on S152, which acts as the Proton donor. The NADP(+) site is built by Y166, K170, V200, and T202. Residue Y166 is the Proton acceptor of the active site. The active-site Lowers pKa of active site Tyr is K170.

It belongs to the short-chain dehydrogenases/reductases (SDR) family.

It participates in secondary metabolite biosynthesis. Its function is as follows. Oxidoreductase; part of the gene cluster that mediates the biosynthesis of calbistrin A and related compounds. Calbistrin A is a secondary metabolite with an interesting structure that was recently found to have bioactivity against leukemia cells. It consists of two polyketides linked by an ester bond: a bicyclic decalin containing polyketide and a linear 12 carbon dioic acid structure. The polyketide synthase calA is probably responsible for forming the decalin moiety. Because calA lacks a designated enoylreductase (ER) domain, the required activity is provided by the trans-enoyl reductase calK. Following release from the PKS, calF then probably catalyzes the oxidation and the subsequent Diels Alder cycloisomerization that lead to the formation of the decalin moiety. The decalin polyketide backbone includes two C-methyl groups, at C7 and C11 in backbone, of which the C7 position is probably methylated by the methyltransferase domain of calA. A candidate for adding the methyl group at C11, if not done by CalA, is the cluster methyltransferase calH. Several additional tailoring enzymes within the cluster could be involved in the modification of the decalin polyketide product. Those include the 3 cytochrome P450 monooxygenases CalE, CalG and CalL, of which one might be responsible for the introduction of the extra hydroxyl group attached to the backbone of the decalin moiety, at position C9 in the backbone, that allows for attachment of the linear moiety. One tailoring enzyme activity that is expected to be involved in biosynthesis of calbistrin is an acyltransferase for connecting the two polyketide synthase products, and which could be performed by the cluster acyltransferase calJ. The enzyme responsible for the biosynthesis of the linear moiety, probably a second PKS, has not been identified yet. The chain is Oxidoreductase calM from Penicillium decumbens.